The following is a 90-amino-acid chain: Guanine nucleotide-binding protein subunit gamma (90 aa).

The S-palmitoyl cysteine moiety is linked to residue Cys86. Cys87 is subject to Cysteine methyl ester. The S-farnesyl cysteine moiety is linked to residue Cys87. Positions Thr88–Met90 are cleaved as a propeptide — removed in mature form.

It belongs to the G protein gamma family. In terms of assembly, g proteins are composed of 3 units, alpha, beta and gamma.

It localises to the membrane. This is Guanine nucleotide-binding protein subunit gamma from Kluyveromyces lactis (strain ATCC 8585 / CBS 2359 / DSM 70799 / NBRC 1267 / NRRL Y-1140 / WM37) (Yeast).